The following is a 292-amino-acid chain: Small ribosomal subunit protein uS2 (292 aa).

The segment at 265 to 292 (TETALDWSDEPVAGDWAAEPAADAQGGW) is disordered. Low complexity predominate over residues 277-292 (AGDWAAEPAADAQGGW).

It belongs to the universal ribosomal protein uS2 family. Component of the small ribosomal subunit. Mature ribosomes consist of a small (40S) and a large (60S) subunit. The 40S subunit contains about 33 different proteins and 1 molecule of RNA (18S). The 60S subunit contains about 49 different proteins and 3 molecules of RNA (25S, 5.8S and 5S). Interacts with RPS21.

Its subcellular location is the cytoplasm. Required for the assembly and/or stability of the 40S ribosomal subunit. Required for the processing of the 20S rRNA-precursor to mature 18S rRNA in a late step of the maturation of 40S ribosomal subunits. This chain is Small ribosomal subunit protein uS2, found in Cryptococcus neoformans var. neoformans serotype D (strain B-3501A) (Filobasidiella neoformans).